The following is a 458-amino-acid chain: tRNA modification GTPase MnmE (458 aa).

3 residues coordinate (6S)-5-formyl-5,6,7,8-tetrahydrofolate: Arg-26, Glu-88, and Arg-127. The 155-residue stretch at 224 to 378 (GLSTAIIGRP…IEDRINQLFF (155 aa)) folds into the TrmE-type G domain. K(+) is bound at residue Asn-234. GTP is bound by residues 234-239 (NVGKSS), 253-259 (TDIAGTT), and 278-281 (DTAG). Mg(2+) is bound at residue Ser-238. The K(+) site is built by Thr-253, Ile-255, and Thr-258. Position 259 (Thr-259) interacts with Mg(2+). Residue Lys-458 participates in (6S)-5-formyl-5,6,7,8-tetrahydrofolate binding.

It belongs to the TRAFAC class TrmE-Era-EngA-EngB-Septin-like GTPase superfamily. TrmE GTPase family. In terms of assembly, homodimer. Heterotetramer of two MnmE and two MnmG subunits. K(+) is required as a cofactor.

Its subcellular location is the cytoplasm. Exhibits a very high intrinsic GTPase hydrolysis rate. Involved in the addition of a carboxymethylaminomethyl (cmnm) group at the wobble position (U34) of certain tRNAs, forming tRNA-cmnm(5)s(2)U34. In Streptococcus pyogenes serotype M5 (strain Manfredo), this protein is tRNA modification GTPase MnmE.